We begin with the raw amino-acid sequence, 393 residues long: Glycerol-3-phosphate dehydrogenase [NAD(+)] 1 (393 aa).

Residues 45-50 (GSGNWG), F133, K157, and A190 each bind NAD(+). A substrate-binding site is contributed by K157. K250 (proton acceptor) is an active-site residue. NAD(+)-binding residues include R316 and Q345. 316–317 (RN) provides a ligand contact to substrate.

This sequence belongs to the NAD-dependent glycerol-3-phosphate dehydrogenase family.

It carries out the reaction sn-glycerol 3-phosphate + NAD(+) = dihydroxyacetone phosphate + NADH + H(+). This Cyberlindnera jadinii (Torula yeast) protein is Glycerol-3-phosphate dehydrogenase [NAD(+)] 1 (gpd1).